Reading from the N-terminus, the 211-residue chain is MWWTPIPEDIVRDPAAFRVGRLTKAHGLKGAVKLELFTDDPDKRFVPGAEFSLQVPDSSPWHGRTLTLTELRWYNSHPVGFFEGVADRTAAESLAKAILWMTPPADEPAEPDAWYDHQLVGLKVLRDGVEVGTVSLVDHFPAQDLLHVDTPSGTVLVPFVQAIVPSVDVEAGTLVITPPLGLFEEIPDEQPTPSATSDAEPGSAPEGDDAR.

A PRC barrel domain is found at 111–182; sequence PDAWYDHQLV…TLVITPPLGL (72 aa). The interval 184-211 is disordered; that stretch reads EEIPDEQPTPSATSDAEPGSAPEGDDAR.

The protein belongs to the RimM family. In terms of assembly, binds ribosomal protein uS19.

It localises to the cytoplasm. Functionally, an accessory protein needed during the final step in the assembly of 30S ribosomal subunit, possibly for assembly of the head region. Essential for efficient processing of 16S rRNA. May be needed both before and after RbfA during the maturation of 16S rRNA. It has affinity for free ribosomal 30S subunits but not for 70S ribosomes. This Clavibacter sepedonicus (Clavibacter michiganensis subsp. sepedonicus) protein is Ribosome maturation factor RimM.